The sequence spans 87 residues: Phytosulfokines 1 (87 aa).

An N-terminal signal peptide occupies residues 1–24; that stretch reads MMKTKSEVLIFFFTLVLLLSMASS. A propeptide spanning residues 25 to 76 is cleaved from the precursor; that stretch reads VILREDGFAPPKPSPTTHEKASTKGDRDGVECKNSDSEEECLVKKTVAAHTD. The disordered stretch occupies residues 31–59; that stretch reads GFAPPKPSPTTHEKASTKGDRDGVECKNS. Over residues 41–59 the composition is skewed to basic and acidic residues; sequence THEKASTKGDRDGVECKNS. 2 positions are modified to sulfotyrosine: tyrosine 77 and tyrosine 79. A propeptide spanning residues 82–87 is cleaved from the precursor; the sequence is DLNLSP.

It belongs to the phytosulfokine family. Post-translationally, sulfation is important for activity and for the binding to a putative membrane receptor. In terms of processing, PSK-beta is produced from PSK-alpha by exopeptidase digestion. As to expression, expressed only in roots.

The protein resides in the secreted. Functionally, promotes plant cell differentiation, organogenesis and somatic embryogenesis as well as cell proliferation. This is Phytosulfokines 1 (PSK1) from Arabidopsis thaliana (Mouse-ear cress).